The primary structure comprises 270 residues: Glucosamine-6-phosphate deaminase (270 aa).

The active-site Proton acceptor; for enolization step is Asp-72. Asp-141 functions as the For ring-opening step in the catalytic mechanism. The active-site Proton acceptor; for ring-opening step is the His-143. The active-site For ring-opening step is Glu-148.

The protein belongs to the glucosamine/galactosamine-6-phosphate isomerase family. NagB subfamily. In terms of assembly, homohexamer.

The catalysed reaction is alpha-D-glucosamine 6-phosphate + H2O = beta-D-fructose 6-phosphate + NH4(+). The protein operates within amino-sugar metabolism; N-acetylneuraminate degradation; D-fructose 6-phosphate from N-acetylneuraminate: step 5/5. With respect to regulation, allosterically activated by N-acetylglucosamine 6-phosphate (GlcNAc6P). Catalyzes the reversible isomerization-deamination of glucosamine 6-phosphate (GlcN6P) to form fructose 6-phosphate (Fru6P) and ammonium ion. The protein is Glucosamine-6-phosphate deaminase of Photorhabdus laumondii subsp. laumondii (strain DSM 15139 / CIP 105565 / TT01) (Photorhabdus luminescens subsp. laumondii).